We begin with the raw amino-acid sequence, 142 residues long: PDZ domain-containing protein 11 (142 aa).

Positions 49 to 131 (TIVLKKPPGA…ILMKVRYFPY (83 aa)) constitute a PDZ domain.

It is found in the cytoplasm. This Danio rerio (Zebrafish) protein is PDZ domain-containing protein 11 (pdzd11).